The chain runs to 191 residues: Protein GrpE (191 aa).

The segment covering Met1–Thr14 has biased composition (polar residues). Positions Met1 to Thr35 are disordered. Positions Glu19–Thr35 are enriched in low complexity.

It belongs to the GrpE family. In terms of assembly, homodimer.

The protein localises to the cytoplasm. In terms of biological role, participates actively in the response to hyperosmotic and heat shock by preventing the aggregation of stress-denatured proteins, in association with DnaK and GrpE. It is the nucleotide exchange factor for DnaK and may function as a thermosensor. Unfolded proteins bind initially to DnaJ; upon interaction with the DnaJ-bound protein, DnaK hydrolyzes its bound ATP, resulting in the formation of a stable complex. GrpE releases ADP from DnaK; ATP binding to DnaK triggers the release of the substrate protein, thus completing the reaction cycle. Several rounds of ATP-dependent interactions between DnaJ, DnaK and GrpE are required for fully efficient folding. The chain is Protein GrpE from Cupriavidus taiwanensis (strain DSM 17343 / BCRC 17206 / CCUG 44338 / CIP 107171 / LMG 19424 / R1) (Ralstonia taiwanensis (strain LMG 19424)).